The primary structure comprises 179 residues: ATP synthase subunit delta (179 aa).

This sequence belongs to the ATPase delta chain family. F-type ATPases have 2 components, F(1) - the catalytic core - and F(0) - the membrane proton channel. F(1) has five subunits: alpha(3), beta(3), gamma(1), delta(1), epsilon(1). F(0) has three main subunits: a(1), b(2) and c(10-14). The alpha and beta chains form an alternating ring which encloses part of the gamma chain. F(1) is attached to F(0) by a central stalk formed by the gamma and epsilon chains, while a peripheral stalk is formed by the delta and b chains.

The protein localises to the cell inner membrane. In terms of biological role, f(1)F(0) ATP synthase produces ATP from ADP in the presence of a proton or sodium gradient. F-type ATPases consist of two structural domains, F(1) containing the extramembraneous catalytic core and F(0) containing the membrane proton channel, linked together by a central stalk and a peripheral stalk. During catalysis, ATP synthesis in the catalytic domain of F(1) is coupled via a rotary mechanism of the central stalk subunits to proton translocation. This protein is part of the stalk that links CF(0) to CF(1). It either transmits conformational changes from CF(0) to CF(1) or is implicated in proton conduction. The sequence is that of ATP synthase subunit delta from Acidithiobacillus ferrooxidans (strain ATCC 23270 / DSM 14882 / CIP 104768 / NCIMB 8455) (Ferrobacillus ferrooxidans (strain ATCC 23270)).